We begin with the raw amino-acid sequence, 274 residues long: ATP synthase subunit delta (274 aa).

Belongs to the ATPase delta chain family. In terms of assembly, F-type ATPases have 2 components, F(1) - the catalytic core - and F(0) - the membrane proton channel. F(1) has five subunits: alpha(3), beta(3), gamma(1), delta(1), epsilon(1). F(0) has three main subunits: a(1), b(2) and c(10-14). The alpha and beta chains form an alternating ring which encloses part of the gamma chain. F(1) is attached to F(0) by a central stalk formed by the gamma and epsilon chains, while a peripheral stalk is formed by the delta and b chains.

It is found in the cell membrane. In terms of biological role, f(1)F(0) ATP synthase produces ATP from ADP in the presence of a proton or sodium gradient. F-type ATPases consist of two structural domains, F(1) containing the extramembraneous catalytic core and F(0) containing the membrane proton channel, linked together by a central stalk and a peripheral stalk. During catalysis, ATP synthesis in the catalytic domain of F(1) is coupled via a rotary mechanism of the central stalk subunits to proton translocation. Its function is as follows. This protein is part of the stalk that links CF(0) to CF(1). It either transmits conformational changes from CF(0) to CF(1) or is implicated in proton conduction. The sequence is that of ATP synthase subunit delta from Corynebacterium efficiens (strain DSM 44549 / YS-314 / AJ 12310 / JCM 11189 / NBRC 100395).